A 376-amino-acid polypeptide reads, in one-letter code: Succinyl-diaminopimelate desuccinylase (376 aa).

H68 serves as a coordination point for Zn(2+). D70 is an active-site residue. D101 contacts Zn(2+). E135 (proton acceptor) is an active-site residue. 3 residues coordinate Zn(2+): E136, E164, and H349.

Belongs to the peptidase M20A family. DapE subfamily. As to quaternary structure, homodimer. The cofactor is Zn(2+). It depends on Co(2+) as a cofactor.

The enzyme catalyses N-succinyl-(2S,6S)-2,6-diaminopimelate + H2O = (2S,6S)-2,6-diaminopimelate + succinate. It functions in the pathway amino-acid biosynthesis; L-lysine biosynthesis via DAP pathway; LL-2,6-diaminopimelate from (S)-tetrahydrodipicolinate (succinylase route): step 3/3. Functionally, catalyzes the hydrolysis of N-succinyl-L,L-diaminopimelic acid (SDAP), forming succinate and LL-2,6-diaminopimelate (DAP), an intermediate involved in the bacterial biosynthesis of lysine and meso-diaminopimelic acid, an essential component of bacterial cell walls. This Marinobacter nauticus (strain ATCC 700491 / DSM 11845 / VT8) (Marinobacter aquaeolei) protein is Succinyl-diaminopimelate desuccinylase.